The sequence spans 503 residues: ATP synthase subunit alpha (503 aa).

170–177 is an ATP binding site; that stretch reads GDRQTGKT.

Belongs to the ATPase alpha/beta chains family. As to quaternary structure, F-type ATPases have 2 components, CF(1) - the catalytic core - and CF(0) - the membrane proton channel. CF(1) has five subunits: alpha(3), beta(3), gamma(1), delta(1), epsilon(1). CF(0) has three main subunits: a(1), b(2) and c(9-12). The alpha and beta chains form an alternating ring which encloses part of the gamma chain. CF(1) is attached to CF(0) by a central stalk formed by the gamma and epsilon chains, while a peripheral stalk is formed by the delta and b chains.

The protein resides in the cell inner membrane. It carries out the reaction ATP + H2O + 4 H(+)(in) = ADP + phosphate + 5 H(+)(out). Its function is as follows. Produces ATP from ADP in the presence of a proton gradient across the membrane. The alpha chain is a regulatory subunit. In Pseudothermotoga lettingae (strain ATCC BAA-301 / DSM 14385 / NBRC 107922 / TMO) (Thermotoga lettingae), this protein is ATP synthase subunit alpha.